The primary structure comprises 81 residues: Photosystem I iron-sulfur center (81 aa).

4Fe-4S ferredoxin-type domains are found at residues 2 to 31 and 39 to 68; these read AHSV…MIPW and IASA…VRVY. [4Fe-4S] cluster-binding residues include C11, C14, C17, C21, C48, C51, C54, and C58.

As to quaternary structure, the eukaryotic PSI reaction center is composed of at least 11 subunits. Requires [4Fe-4S] cluster as cofactor.

The protein localises to the plastid. It is found in the chloroplast thylakoid membrane. It carries out the reaction reduced [plastocyanin] + hnu + oxidized [2Fe-2S]-[ferredoxin] = oxidized [plastocyanin] + reduced [2Fe-2S]-[ferredoxin]. Functionally, apoprotein for the two 4Fe-4S centers FA and FB of photosystem I (PSI); essential for photochemical activity. FB is the terminal electron acceptor of PSI, donating electrons to ferredoxin. The C-terminus interacts with PsaA/B/D and helps assemble the protein into the PSI complex. Required for binding of PsaD and PsaE to PSI. PSI is a plastocyanin-ferredoxin oxidoreductase, converting photonic excitation into a charge separation, which transfers an electron from the donor P700 chlorophyll pair to the spectroscopically characterized acceptors A0, A1, FX, FA and FB in turn. The polypeptide is Photosystem I iron-sulfur center (Psilotum nudum (Whisk fern)).